Here is a 198-residue protein sequence, read N- to C-terminus: MSASRFIKCVTVGDGAVGKTCLLISYTSNTFPTDYVPTVFDNFSANVIVDGNTINLGLWDTAGQEDYNRLRPLSYRGADVFLLAFSLVSKASYENVSKKWVPELRHYAPGVPIILVGTKLDLRDDKQFFAEHPGAVPISTAQGEELKKLIGAPAYIECSAKTQQNVKAVFDAAIKVVLQPPKNKKKKKRKSQKGCSIL.

GTP is bound by residues glycine 13 to cysteine 21, phenylalanine 31 to threonine 38, aspartate 60 to glutamine 64, and threonine 118 to aspartate 121. An Effector region motif is present at residues tyrosine 35 to phenylalanine 43. Cysteine 158 carries the S-palmitoyl cysteine lipid modification. Residue cysteine 195 is modified to Cysteine methyl ester. Cysteine 195 is lipidated: S-geranylgeranyl cysteine. A propeptide spans serine 196–leucine 198 (removed in mature form).

The protein belongs to the small GTPase superfamily. Rho family. Interacts with Rho GDP-dissociation inhibitor 1 and ICR1. Binds to SPK1 when in the inactive GDP-bound form. In terms of tissue distribution, ubiquitous. Preferentially expressed at the tip of root hairs.

The protein resides in the cytoplasm. The protein localises to the cell membrane. Inactive GDP-bound Rho GTPases reside in the cytosol, are found in a complex with Rho GDP-dissociation inhibitors (Rho GDIs), and are released from the GDI protein in order to translocate to membranes upon activation. Involved in cell polarity control during the actin-dependent tip growth of root hairs, thus regulating root hair length and root hair initiation. Contributes, in a SPK1-dependent manner, to the prevention of cortical microtubules organization into parallel arrays oriented perpendicular to the axis of cell elongation to limit anisotropic cell growth during petal development. SPK1-dependent activation is required for auxin-mediated inhibition of PIN2 internalization during gravitropic responses. This is Rac-like GTP-binding protein ARAC3 from Arabidopsis thaliana (Mouse-ear cress).